The chain runs to 492 residues: Homoserine O-acetyltransferase (492 aa).

The AB hydrolase-1 domain maps to 47–354; that stretch reads NVILVCHALT…NYGHDAFLLE (308 aa). The Nucleophile role is filled by S152. Residue R221 coordinates substrate. Catalysis depends on residues D315 and H348. A substrate-binding site is contributed by D349. CBS domains lie at 375–432 and 436–492; these read MKLD…FTTL and LTKN…HRCT.

This sequence belongs to the AB hydrolase superfamily. MetX family. Homodimer.

The protein localises to the cytoplasm. The enzyme catalyses L-homoserine + acetyl-CoA = O-acetyl-L-homoserine + CoA. The protein operates within amino-acid biosynthesis; L-methionine biosynthesis via de novo pathway; O-acetyl-L-homoserine from L-homoserine: step 1/1. Its function is as follows. Transfers an acetyl group from acetyl-CoA to L-homoserine, forming acetyl-L-homoserine. This chain is Homoserine O-acetyltransferase, found in Methanosalsum zhilinae (strain DSM 4017 / NBRC 107636 / OCM 62 / WeN5) (Methanohalophilus zhilinae).